A 321-amino-acid polypeptide reads, in one-letter code: UPF0676 protein C1494.01 (321 aa).

The 109-residue stretch at 159-267 (EEDVLRLLKY…RQTIAYFVTP (109 aa)) folds into the Fe2OG dioxygenase domain.

It belongs to the UPF0676 family.

It is found in the cytoplasm. The protein resides in the nucleus. The protein is UPF0676 protein C1494.01 of Schizosaccharomyces pombe (strain 972 / ATCC 24843) (Fission yeast).